A 270-amino-acid chain; its full sequence is Putative phosphoenolpyruvate synthase regulatory protein (270 aa).

151-158 (GVSRCGKT) contributes to the ADP binding site.

It belongs to the pyruvate, phosphate/water dikinase regulatory protein family. PSRP subfamily.

The catalysed reaction is [pyruvate, water dikinase] + ADP = [pyruvate, water dikinase]-phosphate + AMP + H(+). It catalyses the reaction [pyruvate, water dikinase]-phosphate + phosphate + H(+) = [pyruvate, water dikinase] + diphosphate. Its function is as follows. Bifunctional serine/threonine kinase and phosphorylase involved in the regulation of the phosphoenolpyruvate synthase (PEPS) by catalyzing its phosphorylation/dephosphorylation. The chain is Putative phosphoenolpyruvate synthase regulatory protein from Methylobacillus flagellatus (strain ATCC 51484 / DSM 6875 / VKM B-1610 / KT).